The following is a 491-amino-acid chain: Zinc finger and SCAN domain-containing protein 22 (491 aa).

S9 is subject to Phosphoserine. One can recognise an SCAN box domain in the interval 49-131 (RLRFRHFRYE…VLVEDLTQVL (83 aa)). 2 disordered regions span residues 134–161 (RGWDPGAEPTEASCKQSDLGESEPSNVT) and 204–249 (FKKT…DKFD). Residues 214-224 (VPTDQRGRESG) show a composition bias toward basic and acidic residues. Polar residues predominate over residues 225–241 (ASRNSSSAWPNLTSQEK). 8 consecutive C2H2-type zinc fingers follow at residues 268 to 290 (SKCRECRKMFQSASALEAHQKTH), 296 to 318 (YACSECGKAFSRSTHLAQHQVVH), 324 to 346 (HECKECGKAFSRVTHLTQHQRIH), 352 to 374 (YKCGECGKTFSRSTHLTQHQRVH), 380 to 402 (YECDACGKAFSQSTHLTQHQRIH), 408 to 430 (YKCDACGRAFSDCSALIRHLRIH), 436 to 458 (YQCKVCPKAFAQSSSLIEHQRIH), and 464 to 486 (YKCSDCGKAFSRSSALMVHLRIH). A Glycyl lysine isopeptide (Lys-Gly) (interchain with G-Cter in SUMO2) cross-link involves residue K443.

This sequence belongs to the krueppel C2H2-type zinc-finger protein family.

The protein resides in the nucleus. In terms of biological role, may be involved in transcriptional regulation. The sequence is that of Zinc finger and SCAN domain-containing protein 22 (ZSCAN22) from Homo sapiens (Human).